A 297-amino-acid chain; its full sequence is Formamidopyrimidine-DNA glycosylase (297 aa).

Residue Pro-2 is the Schiff-base intermediate with DNA of the active site. Residue Glu-3 is the Proton donor of the active site. Lys-58 serves as the catalytic Proton donor; for beta-elimination activity. DNA contacts are provided by His-104, Arg-127, and Lys-170. The FPG-type zinc finger occupies 261–297 (SVYDREGKPCRKEGCSGTIQRFVQGGRSTFYCPICQR). Arg-287 serves as the catalytic Proton donor; for delta-elimination activity.

Belongs to the FPG family. As to quaternary structure, monomer. It depends on Zn(2+) as a cofactor.

The enzyme catalyses Hydrolysis of DNA containing ring-opened 7-methylguanine residues, releasing 2,6-diamino-4-hydroxy-5-(N-methyl)formamidopyrimidine.. It catalyses the reaction 2'-deoxyribonucleotide-(2'-deoxyribose 5'-phosphate)-2'-deoxyribonucleotide-DNA = a 3'-end 2'-deoxyribonucleotide-(2,3-dehydro-2,3-deoxyribose 5'-phosphate)-DNA + a 5'-end 5'-phospho-2'-deoxyribonucleoside-DNA + H(+). Functionally, involved in base excision repair of DNA damaged by oxidation or by mutagenic agents. Acts as a DNA glycosylase that recognizes and removes damaged bases. Has a preference for oxidized purines, such as 7,8-dihydro-8-oxoguanine (8-oxoG). Has AP (apurinic/apyrimidinic) lyase activity and introduces nicks in the DNA strand. Cleaves the DNA backbone by beta-delta elimination to generate a single-strand break at the site of the removed base with both 3'- and 5'-phosphates. This Chelativorans sp. (strain BNC1) protein is Formamidopyrimidine-DNA glycosylase.